A 25-amino-acid chain; its full sequence is LRNVEQQCRADALVERAQELIHGQQ.

As to quaternary structure, monomer.

It carries out the reaction Endohydrolysis of the N-glycosidic bond at one specific adenosine on the 28S rRNA.. Functionally, inhibits cell-free translation in a rabbit reticulocyte lysate system. The sequence is that of Ribosome-inactivating protein charantin from Momordica charantia (Bitter gourd).